Reading from the N-terminus, the 943-residue chain is Isoleucine--tRNA ligase (943 aa).

Residues 58–68 carry the 'HIGH' region motif; the sequence is PYANGKIHIGH. Position 567 (Glu-567) interacts with L-isoleucyl-5'-AMP. The short motif at 608–612 is the 'KMSKS' region element; sequence KMSKS. Lys-611 provides a ligand contact to ATP. Cys-906, Cys-909, Cys-926, and Cys-929 together coordinate Zn(2+).

Belongs to the class-I aminoacyl-tRNA synthetase family. IleS type 1 subfamily. In terms of assembly, monomer. It depends on Zn(2+) as a cofactor.

The protein localises to the cytoplasm. It carries out the reaction tRNA(Ile) + L-isoleucine + ATP = L-isoleucyl-tRNA(Ile) + AMP + diphosphate. Catalyzes the attachment of isoleucine to tRNA(Ile). As IleRS can inadvertently accommodate and process structurally similar amino acids such as valine, to avoid such errors it has two additional distinct tRNA(Ile)-dependent editing activities. One activity is designated as 'pretransfer' editing and involves the hydrolysis of activated Val-AMP. The other activity is designated 'posttransfer' editing and involves deacylation of mischarged Val-tRNA(Ile). In Pseudomonas putida (strain W619), this protein is Isoleucine--tRNA ligase.